We begin with the raw amino-acid sequence, 277 residues long: RsbT co-antagonist protein RsbRB (277 aa).

The 112-residue stretch at 165 to 276 (SSPVITLSKS…TNLAQALNYH (112 aa)) folds into the STAS domain. T186 bears the Phosphothreonine mark.

As to quaternary structure, interacts with RsbRA and RsbS in the stressosome. The stressosome probably also contains RsbRC and RsbRD. Post-translationally, phosphorylated by RsbT.

In terms of biological role, one of 4 functionally non-identical RsbR paralogs, it functions in the environmental signaling branch of the general stress response. Its function is as follows. Negative regulator of sigma-B activity. Non-phosphorylated RsbS binds to RsbT, preventing its association with RsbU. Requires any one of RsbRA, RsbRB, RsbRC or RsbRD to sequester RsbT. When RsbS and the RsbR paralog(s) are phosphorylated, they release RsbT, which can then bind and activate RsbU. This is RsbT co-antagonist protein RsbRB (rsbRB) from Bacillus subtilis (strain 168).